The sequence spans 116 residues: Large ribosomal subunit protein bL17 (116 aa).

It belongs to the bacterial ribosomal protein bL17 family. As to quaternary structure, part of the 50S ribosomal subunit. Contacts protein L32.

The chain is Large ribosomal subunit protein bL17 from Synechococcus sp. (strain JA-3-3Ab) (Cyanobacteria bacterium Yellowstone A-Prime).